We begin with the raw amino-acid sequence, 468 residues long: Beta-monoglucosyldiacylglycerol synthase (468 aa).

4 helical membrane passes run 51–71 (AALV…VSWG), 72–92 (SIFI…VVFA), 358–378 (MLMF…DLLM), and 387–407 (MLGP…FAGL).

This sequence belongs to the glycosyltransferase 2 family. Requires Mg(2+) as cofactor.

The protein resides in the membrane. It catalyses the reaction a 1,2-diacyl-sn-glycerol + UDP-alpha-D-glucose = a 1,2-diacyl-3-O-(beta-D-glucopyranosyl)-sn-glycerol + UDP + H(+). Functionally, glucosyltransferase involved in the biosynthesis of the non-bilayer-forming membrane lipid beta-monoglucosyldiacylglycerol which contributes to regulate the properties and stability of the membrane. Catalyzes the transfer of a glucosyl residue from UDP-Glc to diacylglycerol (DAG) acceptor to form the corresponding beta-glucosyl-DAG (1,2-diacyl-3-O-(beta-D-glucopyranosyl)-sn-glycerol). It can only use UDP-Glc as sugar donor. Two types of DAG (dipalmitoyl-DAG (DPDAG) and 1-oleoyl-2-palmitoyl-DAG (OPDAG)) can be used as sugar acceptors, but OPDAG is preferred. The sequence is that of Beta-monoglucosyldiacylglycerol synthase from Nostoc sp. (strain PCC 7120 / SAG 25.82 / UTEX 2576).